A 615-amino-acid polypeptide reads, in one-letter code: Dihydroxy-acid dehydratase (615 aa).

Residue aspartate 81 participates in Mg(2+) binding. Cysteine 122 provides a ligand contact to [2Fe-2S] cluster. The Mg(2+) site is built by aspartate 123 and lysine 124. Residue lysine 124 is modified to N6-carboxylysine. [2Fe-2S] cluster is bound at residue cysteine 195. Glutamate 491 is a binding site for Mg(2+). The Proton acceptor role is filled by serine 517.

Belongs to the IlvD/Edd family. As to quaternary structure, homodimer. [2Fe-2S] cluster is required as a cofactor. Requires Mg(2+) as cofactor.

The catalysed reaction is (2R)-2,3-dihydroxy-3-methylbutanoate = 3-methyl-2-oxobutanoate + H2O. The enzyme catalyses (2R,3R)-2,3-dihydroxy-3-methylpentanoate = (S)-3-methyl-2-oxopentanoate + H2O. It participates in amino-acid biosynthesis; L-isoleucine biosynthesis; L-isoleucine from 2-oxobutanoate: step 3/4. Its pathway is amino-acid biosynthesis; L-valine biosynthesis; L-valine from pyruvate: step 3/4. Its function is as follows. Functions in the biosynthesis of branched-chain amino acids. Catalyzes the dehydration of (2R,3R)-2,3-dihydroxy-3-methylpentanoate (2,3-dihydroxy-3-methylvalerate) into 2-oxo-3-methylpentanoate (2-oxo-3-methylvalerate) and of (2R)-2,3-dihydroxy-3-methylbutanoate (2,3-dihydroxyisovalerate) into 2-oxo-3-methylbutanoate (2-oxoisovalerate), the penultimate precursor to L-isoleucine and L-valine, respectively. The chain is Dihydroxy-acid dehydratase from Shewanella piezotolerans (strain WP3 / JCM 13877).